The chain runs to 235 residues: Riboflavin kinase (235 aa).

Mg(2+)-binding residues include threonine 45 and asparagine 47. Glutamate 140 acts as the Nucleophile in catalysis.

This sequence belongs to the flavokinase family. Zn(2+) serves as cofactor. The cofactor is Mg(2+).

The catalysed reaction is riboflavin + ATP = FMN + ADP + H(+). The protein operates within cofactor biosynthesis; FMN biosynthesis; FMN from riboflavin (ATP route): step 1/1. Its function is as follows. Catalyzes the phosphorylation of riboflavin (vitamin B2) to form flavin mononucleotide (FMN) coenzyme. The sequence is that of Riboflavin kinase (FMN1) from Chaetomium globosum (strain ATCC 6205 / CBS 148.51 / DSM 1962 / NBRC 6347 / NRRL 1970) (Soil fungus).